The sequence spans 135 residues: Meiotically up-regulated gene 116 protein (135 aa).

The chain crosses the membrane as a helical span at residues 20-39 (YFHSFHCFFLLCFTVMLCVV). The disordered stretch occupies residues 81-101 (QTPTKKGNKTKKKRKKEKKKE). Basic residues predominate over residues 86 to 98 (KGNKTKKKRKKEK).

It localises to the mitochondrion membrane. Has a role in meiosis. This is Meiotically up-regulated gene 116 protein (mug116) from Schizosaccharomyces pombe (strain 972 / ATCC 24843) (Fission yeast).